The following is a 225-amino-acid chain: Acidic leucine-rich nuclear phosphoprotein 32-related protein 2 (225 aa).

3 LRR repeats span residues 39-60 (KLEL…PVLP), 61-82 (ALNY…DVLI), and 87-107 (EIKK…RTLK). The region spanning 121–161 (SSLGLLDDYRVKMFEMIPSLKILDGCDVDGEEVEEEFAAGE) is the LRRCT domain. Acidic residues predominate over residues 155-175 (EEFAAGEGAEDSDEGDSDEDG). The interval 155–225 (EEFAAGEGAE…DEPEAKKSAE (71 aa)) is disordered.

The protein belongs to the ANP32 family.

The chain is Acidic leucine-rich nuclear phosphoprotein 32-related protein 2 from Caenorhabditis elegans.